A 200-amino-acid chain; its full sequence is Glycerol-3-phosphate acyltransferase (200 aa).

The next 5 helical transmembrane spans lie at 6–26 (LTLG…AVLV), 56–76 (SAAM…YIAF), 82–102 (QVAL…PIFF), 118–138 (APIG…MVLI), and 141–161 (YSSL…WFLD).

Belongs to the PlsY family. Probably interacts with PlsX.

The protein resides in the cell inner membrane. The enzyme catalyses an acyl phosphate + sn-glycerol 3-phosphate = a 1-acyl-sn-glycero-3-phosphate + phosphate. It functions in the pathway lipid metabolism; phospholipid metabolism. In terms of biological role, catalyzes the transfer of an acyl group from acyl-phosphate (acyl-PO(4)) to glycerol-3-phosphate (G3P) to form lysophosphatidic acid (LPA). This enzyme utilizes acyl-phosphate as fatty acyl donor, but not acyl-CoA or acyl-ACP. The protein is Glycerol-3-phosphate acyltransferase of Shewanella sediminis (strain HAW-EB3).